The primary structure comprises 477 residues: MKILHICSEMYPLIKTGGLADVMGALPYAQQSAGNDVRVLIPYYPQVASKLGETVEVATVGTFAGVVTVRFAYLNGLGVYVIDAPHLFDRRLPYYDDNYQDYTDNYKRFALLGYLGAQLASGLDHWWGRSDVLHAHDWQAGLACAYLKSWNSPVKSVFTIHNIAYPGRFQAYHLAELALPWEFFHVNGLEFYGEISYLKAGLFYADRVTAVSPTYAREITEQIAGAGMHGLLQQRLAEGALRGILNGVDDTVWNPETDTNIVANYRPNYMQGKGKNKSELQRYFGLPEDKDALLFVMVTRLTEQKGADFLLARIDQIMQHNVQLVVLGSGSPDLEWALRDAQSRYPHKIGLKIGYDEALSHQIIAGGDVILVPSRFEPCGLTQLYGLKYGTLPLVRRTGGLADTVNDAHKESIENRTATGFVFSYPDADNFYDAVLRAINLWGKNKLWSSVRQNALAQDFGWAKVAQQYQELYYEIV.

Position 15 (lysine 15) interacts with ADP-alpha-D-glucose.

The protein belongs to the glycosyltransferase 1 family. Bacterial/plant glycogen synthase subfamily.

It catalyses the reaction [(1-&gt;4)-alpha-D-glucosyl](n) + ADP-alpha-D-glucose = [(1-&gt;4)-alpha-D-glucosyl](n+1) + ADP + H(+). It functions in the pathway glycan biosynthesis; glycogen biosynthesis. Functionally, synthesizes alpha-1,4-glucan chains using ADP-glucose. In Glaesserella parasuis serovar 5 (strain SH0165) (Haemophilus parasuis), this protein is Glycogen synthase.